The sequence spans 443 residues: Tol-Pal system protein TolB (443 aa).

The N-terminal stretch at 1–33 is a signal peptide; it reads MKIGIINTKIRTVFSAFACMIAASLVCTMPARA.

This sequence belongs to the TolB family. As to quaternary structure, the Tol-Pal system is composed of five core proteins: the inner membrane proteins TolA, TolQ and TolR, the periplasmic protein TolB and the outer membrane protein Pal. They form a network linking the inner and outer membranes and the peptidoglycan layer.

The protein localises to the periplasm. Its function is as follows. Part of the Tol-Pal system, which plays a role in outer membrane invagination during cell division and is important for maintaining outer membrane integrity. The polypeptide is Tol-Pal system protein TolB (Brucella melitensis biotype 1 (strain ATCC 23456 / CCUG 17765 / NCTC 10094 / 16M)).